The chain runs to 293 residues: Small ribosomal subunit protein uS5 (293 aa).

The disordered stretch occupies residues 1–56 (MADDAGAAGGPGGPGGPGMGNRGGFRGGFGSGIRGRGRGRGRGRGRGRGARGGKAE). Residue Ala-2 is modified to N-acetylalanine. Positions 7 to 34 (AAGGPGGPGGPGMGNRGGFRGGFGSGIR) are enriched in gly residues. The span at 35–51 (GRGRGRGRGRGRGRGAR) shows a compositional bias: basic residues. Residues Lys-54 and Lys-58 each participate in a glycyl lysine isopeptide (Lys-Gly) (interchain with G-Cter in ubiquitin) cross-link. One can recognise an S5 DRBM domain in the interval 102–165 (LKDEVLKIMP…ILAKLSIVPV (64 aa)). Thr-252 bears the Phosphothreonine mark. Position 263 is an N6-acetyllysine (Lys-263). Phosphoserine is present on Ser-264. Thr-270 bears the Phosphothreonine mark. Lys-275 carries the post-translational modification N6-acetyllysine; alternate. Lys-275 participates in a covalent cross-link: Glycyl lysine isopeptide (Lys-Gly) (interchain with G-Cter in SUMO1); alternate. Lys-275 is covalently cross-linked (Glycyl lysine isopeptide (Lys-Gly) (interchain with G-Cter in SUMO2); alternate). Lys-275 is covalently cross-linked (Glycyl lysine isopeptide (Lys-Gly) (interchain with G-Cter in ubiquitin); alternate). Ser-281 carries the post-translational modification Phosphoserine.

Belongs to the universal ribosomal protein uS5 family. In terms of assembly, component of the small ribosomal subunit. Interacts with zinc finger protein ZNF277 (via zinc-finger domains); the interaction is direct; the interaction is extra-ribosomal. Interaction with ZNF277 competes with the binding of RPS2 to protein arginine methyltransferase PRMT3. In terms of processing, citrullinated by PADI4 in the Arg/Gly-rich region. Post-translationally, asymmetric arginine dimethylation by PRMT3 occurs at multiple sites in the Arg/Gly-rich region. Monoubiquitinated at Lys-54 and Lys-58 by RNF10 when a ribosome has stalled during translation, leading to its degradation by the proteasome. Deubiquitinated at Lys-54 and Lys-58 by USP10, preventing degradation by the proteasome and promoting 40S ribosome subunit recycling following ribosome dissociation.

It is found in the cytoplasm. Its subcellular location is the nucleus. The protein localises to the nucleolus. Functionally, component of the ribosome, a large ribonucleoprotein complex responsible for the synthesis of proteins in the cell. The small ribosomal subunit (SSU) binds messenger RNAs (mRNAs) and translates the encoded message by selecting cognate aminoacyl-transfer RNA (tRNA) molecules. The large subunit (LSU) contains the ribosomal catalytic site termed the peptidyl transferase center (PTC), which catalyzes the formation of peptide bonds, thereby polymerizing the amino acids delivered by tRNAs into a polypeptide chain. The nascent polypeptides leave the ribosome through a tunnel in the LSU and interact with protein factors that function in enzymatic processing, targeting, and the membrane insertion of nascent chains at the exit of the ribosomal tunnel. Plays a role in the assembly and function of the 40S ribosomal subunit. Mutations in this protein affects the control of translational fidelity. Involved in nucleolar processing of pre-18S ribosomal RNA and ribosome assembly. This chain is Small ribosomal subunit protein uS5 (RPS2), found in Homo sapiens (Human).